The primary structure comprises 272 residues: Cerberus (272 aa).

The first 19 residues, 1–19 (MSLLLLQLLVLSCLGDTEP), serve as a signal peptide directing secretion. Disulfide bonds link Cys168–Cys215, Cys182–Cys229, Cys192–Cys245, and Cys196–Cys247. The 86-residue stretch at 168-253 (CRTLPFSQSV…ECNCETQKIE (86 aa)) folds into the CTCK domain. Asn228 is a glycosylation site (N-linked (GlcNAc...) asparagine).

It belongs to the DAN family.

The protein resides in the secreted. Its function is as follows. Cytokine that acts as a regulator of the activity of Nodal/BMP pathways during the establishment of bilateral asymmetry in the head and trunk of the embryo. This Gallus gallus (Chicken) protein is Cerberus (CER1).